The primary structure comprises 65 residues: Period circadian protein (65 aa).

Residues 1–65 (EGSGGSGSSG…VTLTESLLNK (65 aa)) form a disordered region. The segment covering 18–28 (VRMSSVTNTSN) has biased composition (polar residues). The segment covering 29–38 (AGTGTSAGDN) has biased composition (low complexity). A compositionally biased stretch (polar residues) spans 56–65 (VTLTESLLNK).

As to quaternary structure, forms a heterodimer with timeless (TIM); the complex then translocates into the nucleus. In terms of processing, phosphorylated with a circadian rhythmicity, probably by the double-time protein (dbt). Phosphorylation could be implicated in the stability of per monomer and in the formation of heterodimer per-tim.

It is found in the nucleus. The protein resides in the cytoplasm. Its subcellular location is the perinuclear region. Essential for biological clock functions. Determines the period length of circadian and ultradian rhythms; an increase in PER dosage leads to shortened circadian rhythms and a decrease leads to lengthened circadian rhythms. Essential for the circadian rhythmicity of locomotor activity, eclosion behavior, and for the rhythmic component of the male courtship song that originates in the thoracic nervous system. The biological cycle depends on the rhythmic formation and nuclear localization of the TIM-PER complex. Light induces the degradation of TIM, which promotes elimination of PER. Nuclear activity of the heterodimer coordinatively regulates PER and TIM transcription through a negative feedback loop. Behaves as a negative element in circadian transcriptional loop. Does not appear to bind DNA, suggesting indirect transcriptional inhibition. This Drosophila mojavensis (Fruit fly) protein is Period circadian protein (per).